A 296-amino-acid polypeptide reads, in one-letter code: Giardin subunit alpha-2 (296 aa).

Annexin repeat units follow at residues 2-71 (PKLS…MDLF), 73-143 (DRHE…MEKW), 153-223 (GSPD…AHFA), and 226-293 (GMHK…TLWR).

Belongs to the annexin family. Giardin subunit alpha subfamily.

It is found in the cytoplasm. It localises to the cytoskeleton. Giardins are involved in parasite attachment to the intestinal mucosa and in the cytoskeletal disassembly and reassembly that marks the transition from infectious trophozoite to transmissible cyst. They may interact with other cytoskeletal proteins such as microtubules in the microribbons or crossbridges, to maintain the integrity of the ventral disk. The protein is Giardin subunit alpha-2 of Giardia intestinalis (Giardia lamblia).